The sequence spans 366 residues: tRNA(Met) cytidine acetate ligase (366 aa).

ATP contacts are provided by residues isoleucine 7–leucine 20, glycine 96, asparagine 152, and arginine 175.

Belongs to the TmcAL family.

It is found in the cytoplasm. The enzyme catalyses cytidine(34) in elongator tRNA(Met) + acetate + ATP = N(4)-acetylcytidine(34) in elongator tRNA(Met) + AMP + diphosphate. Functionally, catalyzes the formation of N(4)-acetylcytidine (ac(4)C) at the wobble position of elongator tRNA(Met), using acetate and ATP as substrates. First activates an acetate ion to form acetyladenylate (Ac-AMP) and then transfers the acetyl group to tRNA to form ac(4)C34. The chain is tRNA(Met) cytidine acetate ligase from Streptococcus equi subsp. zooepidemicus (strain H70).